A 122-amino-acid chain; its full sequence is Large ribosomal subunit protein uL14 (122 aa).

The protein belongs to the universal ribosomal protein uL14 family. In terms of assembly, part of the 50S ribosomal subunit. Forms a cluster with proteins L3 and L19. In the 70S ribosome, L14 and L19 interact and together make contacts with the 16S rRNA in bridges B5 and B8.

In terms of biological role, binds to 23S rRNA. Forms part of two intersubunit bridges in the 70S ribosome. This chain is Large ribosomal subunit protein uL14, found in Staphylococcus aureus (strain MW2).